We begin with the raw amino-acid sequence, 540 residues long: 2,3-bisphosphoglycerate-independent phosphoglycerate mutase (540 aa).

Residues Asp13 and Ser63 each coordinate Mn(2+). The active-site Phosphoserine intermediate is the Ser63. Substrate contacts are provided by residues His124, 154–155, Arg186, Arg192, 262–265, and Lys356; these read RD and RPDR. The Mn(2+) site is built by Asp423, His427, Asp464, His465, and His483.

This sequence belongs to the BPG-independent phosphoglycerate mutase family. In terms of assembly, monomer. It depends on Mn(2+) as a cofactor.

It carries out the reaction (2R)-2-phosphoglycerate = (2R)-3-phosphoglycerate. Its pathway is carbohydrate degradation; glycolysis; pyruvate from D-glyceraldehyde 3-phosphate: step 3/5. In terms of biological role, catalyzes the interconversion of 2-phosphoglycerate and 3-phosphoglycerate. The protein is 2,3-bisphosphoglycerate-independent phosphoglycerate mutase of Chloroflexus aggregans (strain MD-66 / DSM 9485).